The chain runs to 95 residues: Large ribosomal subunit protein bL25 (95 aa).

This sequence belongs to the bacterial ribosomal protein bL25 family. As to quaternary structure, part of the 50S ribosomal subunit; part of the 5S rRNA/L5/L18/L25 subcomplex. Contacts the 5S rRNA. Binds to the 5S rRNA independently of L5 and L18.

Functionally, this is one of the proteins that binds to the 5S RNA in the ribosome where it forms part of the central protuberance. The protein is Large ribosomal subunit protein bL25 of Glaesserella parasuis serovar 5 (strain SH0165) (Haemophilus parasuis).